We begin with the raw amino-acid sequence, 250 residues long: 2,3-bisphosphoglycerate-dependent phosphoglycerate mutase (250 aa).

Residues 10-17 (RHGESQWN), 23-24 (TG), Arg62, 89-92 (ERHY), Lys100, 116-117 (RR), and 185-186 (GN) contribute to the substrate site. His11 (tele-phosphohistidine intermediate) is an active-site residue. Glu89 functions as the Proton donor/acceptor in the catalytic mechanism.

It belongs to the phosphoglycerate mutase family. BPG-dependent PGAM subfamily. As to quaternary structure, homodimer.

It carries out the reaction (2R)-2-phosphoglycerate = (2R)-3-phosphoglycerate. It functions in the pathway carbohydrate degradation; glycolysis; pyruvate from D-glyceraldehyde 3-phosphate: step 3/5. Its function is as follows. Catalyzes the interconversion of 2-phosphoglycerate and 3-phosphoglycerate. This is 2,3-bisphosphoglycerate-dependent phosphoglycerate mutase from Cronobacter sakazakii (strain ATCC BAA-894) (Enterobacter sakazakii).